The chain runs to 728 residues: Catalase-peroxidase 2 (728 aa).

Residues 1–20 (MSNEGKCPFNHGKRNGTTNR) are disordered. The segment at residues 91-214 (WHSAGTYRTG…LAAVQMGLIY (124 aa)) is a cross-link (tryptophyl-tyrosyl-methioninium (Trp-Tyr) (with M-240)). Histidine 92 serves as the catalytic Proton acceptor. The segment at residues 214-240 (YVNPEGPNGNPDPLASARDIRETFARM) is a cross-link (tryptophyl-tyrosyl-methioninium (Tyr-Met) (with W-91)). Histidine 255 serves as a coordination point for heme b. The tract at residues 335 to 355 (AHQWQPKGGAGADSVPDPFEP) is disordered.

The protein belongs to the peroxidase family. Peroxidase/catalase subfamily. As to quaternary structure, homodimer or homotetramer. Heme b serves as cofactor. Post-translationally, formation of the three residue Trp-Tyr-Met cross-link is important for the catalase, but not the peroxidase activity of the enzyme.

It carries out the reaction H2O2 + AH2 = A + 2 H2O. The enzyme catalyses 2 H2O2 = O2 + 2 H2O. Bifunctional enzyme with both catalase and broad-spectrum peroxidase activity. This is Catalase-peroxidase 2 from Burkholderia cenocepacia (strain HI2424).